Reading from the N-terminus, the 708-residue chain is Lactotransferrin (708 aa).

The N-terminal stretch at 1-19 is a signal peptide; sequence MKLFVPALLSLGALGLCLA. Transferrin-like domains lie at 25–352 and 364–693; these read VRWC…NLRE and VVWC…NLKK. 2 disulfides stabilise this stretch: Cys-28-Cys-64 and Cys-38-Cys-55. Asp-79 serves as a coordination point for Fe(3+). Residue Lys-92 is part of the active site. Tyr-111 is a Fe(3+) binding site. Disulfide bonds link Cys-134/Cys-217, Cys-176/Cys-192, Cys-179/Cys-202, Cys-189/Cys-200, and Cys-250/Cys-264. Residues Arg-140, Ala-142, and Gly-143 each coordinate hydrogencarbonate. Tyr-211 is a binding site for Fe(3+). Residue Asn-252 is glycosylated (N-linked (GlcNAc...) (high mannose) asparagine). His-272 contributes to the Fe(3+) binding site. Residue Ser-278 is the Nucleophile of the active site. A glycan (N-linked (GlcNAc...) asparagine) is linked at Asn-300. Intrachain disulfides connect Cys-367–Cys-399 and Cys-377–Cys-390. N-linked (GlcNAc...) (complex) asparagine; alternate glycosylation is present at Asn-387. Asn-387 carries an N-linked (GlcNAc...) (high mannose) asparagine; alternate glycan. Asn-387 is a glycosylation site (N-linked (GlcNAc...) (hybrid) asparagine; alternate). Residues Asp-414 and Tyr-452 each coordinate Fe(3+). 8 disulfide bridges follow: Cys-424–Cys-703, Cys-444–Cys-666, Cys-476–Cys-551, Cys-500–Cys-694, Cys-510–Cys-524, Cys-521–Cys-534, Cys-592–Cys-606, and Cys-644–Cys-649. Positions 478, 482, 484, and 485 each coordinate hydrogencarbonate. An N-linked (GlcNAc...) (complex) asparagine; alternate glycan is attached at Asn-495. Residue Asn-495 is glycosylated (N-linked (GlcNAc...) (high mannose) asparagine; alternate). Asn-495 carries N-linked (GlcNAc...) (hybrid) asparagine; alternate glycosylation. A Fe(3+)-binding site is contributed by Tyr-545. Asn-564 is a glycosylation site (N-linked (GlcNAc...) (high mannose) asparagine). His-614 lines the Fe(3+) pocket.

This sequence belongs to the transferrin family. Monomer. Found in a complex with LTF, CLU, EPPIN and SEMG1. Found in a complex with MPO and LTF; interacts directly with CP, allows Fe(3+) incorporation into LTF and activation of CP ferroxidase activity. In terms of processing, poly-N-acetyllactosaminic carbohydrate moiety seems to be needed for TLR4 activation.

The protein localises to the secreted. It localises to the cytoplasmic granule. Its function is as follows. Transferrins are iron binding transport proteins which can bind two Fe(3+) ions in association with the binding of an anion, usually bicarbonate. In terms of biological role, major iron-binding and multifunctional protein found in exocrine fluids such as breast milk and mucosal secretions. Has antimicrobial activity, which depends on the extracellular cation concentration. Antimicrobial properties include bacteriostasis, which is related to its ability to sequester free iron and thus inhibit microbial growth, as well as direct bactericidal properties leading to the release of lipopolysaccharides from the bacterial outer membrane. Can also prevent bacterial biofilm development in P.aeruginosa infection. Has weak antifungal activity against C.albicans. Has anabolic, differentiating and anti-apoptotic effects on osteoblasts and can also inhibit osteoclastogenesis, possibly playing a role in the regulation of bone growth. Promotes binding of species C adenoviruses to epithelial cells, promoting adenovirus infection. Can inhibit papillomavirus infections. Stimulates the TLR4 signaling pathway leading to NF-kappa-B activation and subsequent pro-inflammatory cytokine production while also interfering with the lipopolysaccharide (LPS)-stimulated TLR4 signaling. Inhibits neutrophil granulocyte migration to sites of apoptosis, when secreted by apoptotic cells. Stimulates VEGFA-mediated endothelial cell migration and proliferation. Binds heparin, chondroitin sulfate and possibly other glycosaminoglycans (GAGs). Also binds specifically to pneumococcal surface protein A (PspA), the lipid A portion of bacterial lipopolysaccharide (LPS), lysozyme and DNA. Functionally, lactoferricin binds to the bacterial surface and is crucial for the bactericidal functions. Has some antiviral activity against papillomavirus infection. N-terminal region shows strong antifungal activity against C.albicans. Contains two BBXB heparin-binding consensus sequences that appear to form the predominate functional GAG-binding site. The lactotransferrin transferrin-like domain 1 functions as a serine protease of the peptidase S60 family that cuts arginine rich regions. This function contributes to the antimicrobial activity. Shows a preferential cleavage at -Arg-Ser-Arg-Arg-|- and -Arg-Arg-Ser-Arg-|-, and of Z-Phe-Arg-|-aminomethylcoumarin sites. This chain is Lactotransferrin (LTF), found in Capra hircus (Goat).